A 278-amino-acid chain; its full sequence is Probable ribosomal RNA small subunit methyltransferase A (278 aa).

Residues histidine 25, methionine 27, glycine 52, glutamate 73, aspartate 98, and asparagine 114 each contribute to the S-adenosyl-L-methionine site.

This sequence belongs to the class I-like SAM-binding methyltransferase superfamily. rRNA adenine N(6)-methyltransferase family. RsmA subfamily.

It is found in the cytoplasm. Specifically dimethylates two adjacent adenosines in the loop of a conserved hairpin near the 3'-end of 16S rRNA in the 30S particle. May play a critical role in biogenesis of 30S subunits. The sequence is that of Probable ribosomal RNA small subunit methyltransferase A from Methanopyrus kandleri (strain AV19 / DSM 6324 / JCM 9639 / NBRC 100938).